We begin with the raw amino-acid sequence, 631 residues long: Polyadenylate-binding protein 3 (631 aa).

RRM domains follow at residues 11–89, 99–175, 191–268, and 294–370; these read ASLY…WSQR, GNIF…QFKS, PNVY…RAQK, and VNLY…LAQR. Tyr-140 bears the Phosphotyrosine mark. At Ser-315 the chain carries Phosphoserine. Lys-361 bears the N6,N6-dimethyllysine; alternate mark. A Glycyl lysine isopeptide (Lys-Gly) (interchain with G-Cter in SUMO2); alternate cross-link involves residue Lys-361. Tyr-364 bears the Phosphotyrosine mark. Residues Arg-426, Arg-430, and Arg-449 each carry the omega-N-methylarginine modification. Dimethylated arginine is present on Arg-501. Arg-513 carries the post-translational modification Omega-N-methylarginine. The PABC domain maps to 537–614; it reads QETLTASRLA…AVAVLQAHQA (78 aa).

The protein belongs to the polyadenylate-binding protein type-1 family. In terms of tissue distribution, testis specific.

The protein resides in the cytoplasm. Binds the poly(A) tail of mRNA. May be involved in cytoplasmic regulatory processes of mRNA metabolism. Binds poly(A) with a slightly lower affinity as compared to PABPC1. This is Polyadenylate-binding protein 3 (PABPC3) from Homo sapiens (Human).